The primary structure comprises 192 residues: Fe/S biogenesis protein NfuA (192 aa).

Cys149 and Cys152 together coordinate [4Fe-4S] cluster.

It belongs to the NfuA family. In terms of assembly, homodimer. It depends on [4Fe-4S] cluster as a cofactor.

Functionally, involved in iron-sulfur cluster biogenesis. Binds a 4Fe-4S cluster, can transfer this cluster to apoproteins, and thereby intervenes in the maturation of Fe/S proteins. Could also act as a scaffold/chaperone for damaged Fe/S proteins. In Shewanella pealeana (strain ATCC 700345 / ANG-SQ1), this protein is Fe/S biogenesis protein NfuA.